The primary structure comprises 216 residues: uncharacterized protein (216 aa).

The chain crosses the membrane as a helical span at residues 5-25; the sequence is YVKALVAVTVALGVLLPSTIS. Composition is skewed to low complexity over residues 28–67 and 89–108; these read KSFS…SSSS and KASS…ATSK. The tract at residues 28 to 115 is disordered; sequence KSFSGRSSSS…TSKVTGKTYS (88 aa). A run of 2 helical transmembrane segments spans residues 137–157 and 183–203; these read GFAP…MFMI and IAWI…IALI.

Its subcellular location is the cell membrane. This is an uncharacterized protein from Bacillus subtilis (strain 168).